The chain runs to 729 residues: Fatty acid oxidation complex subunit alpha (729 aa).

An enoyl-CoA hydratase/isomerase region spans residues 1 to 189 (MLYKGDTLYL…KIGLVDGVVK (189 aa)). Asp296 provides a ligand contact to substrate. The interval 311-729 (ETPKQAAVLG…ARPVGDLKTA (419 aa)) is 3-hydroxyacyl-CoA dehydrogenase. NAD(+)-binding positions include Met324, Asp343, 400-402 (IVE), Lys407, and Ser429. His450 serves as the catalytic For 3-hydroxyacyl-CoA dehydrogenase activity. NAD(+) is bound at residue Asn453. Substrate-binding residues include Asn500 and Tyr660. The interval 708-729 (RHNEPYYPPVEPARPVGDLKTA) is disordered.

The protein in the N-terminal section; belongs to the enoyl-CoA hydratase/isomerase family. In the C-terminal section; belongs to the 3-hydroxyacyl-CoA dehydrogenase family. In terms of assembly, heterotetramer of two alpha chains (FadB) and two beta chains (FadA).

The catalysed reaction is a (3S)-3-hydroxyacyl-CoA + NAD(+) = a 3-oxoacyl-CoA + NADH + H(+). It carries out the reaction a (3S)-3-hydroxyacyl-CoA = a (2E)-enoyl-CoA + H2O. The enzyme catalyses a 4-saturated-(3S)-3-hydroxyacyl-CoA = a (3E)-enoyl-CoA + H2O. It catalyses the reaction (3S)-3-hydroxybutanoyl-CoA = (3R)-3-hydroxybutanoyl-CoA. The catalysed reaction is a (3Z)-enoyl-CoA = a 4-saturated (2E)-enoyl-CoA. It carries out the reaction a (3E)-enoyl-CoA = a 4-saturated (2E)-enoyl-CoA. The protein operates within lipid metabolism; fatty acid beta-oxidation. Involved in the aerobic and anaerobic degradation of long-chain fatty acids via beta-oxidation cycle. Catalyzes the formation of 3-oxoacyl-CoA from enoyl-CoA via L-3-hydroxyacyl-CoA. It can also use D-3-hydroxyacyl-CoA and cis-3-enoyl-CoA as substrate. This Escherichia coli O157:H7 protein is Fatty acid oxidation complex subunit alpha.